Consider the following 229-residue polypeptide: UPF0173 metal-dependent hydrolase Hbut_0886 (229 aa).

It belongs to the UPF0173 family.

The protein is UPF0173 metal-dependent hydrolase Hbut_0886 of Hyperthermus butylicus (strain DSM 5456 / JCM 9403 / PLM1-5).